The chain runs to 439 residues: 3-phosphoshikimate 1-carboxyvinyltransferase (439 aa).

Positions 31, 32, and 36 each coordinate 3-phosphoshikimate. Lys31 contacts phosphoenolpyruvate. Residues Gly103 and Arg131 each coordinate phosphoenolpyruvate. The 3-phosphoshikimate site is built by Ser175, Gln177, Asp322, and Lys349. Gln177 contacts phosphoenolpyruvate. Asp322 (proton acceptor) is an active-site residue. Arg353 and Arg397 together coordinate phosphoenolpyruvate.

The protein belongs to the EPSP synthase family. In terms of assembly, monomer.

It is found in the cytoplasm. The enzyme catalyses 3-phosphoshikimate + phosphoenolpyruvate = 5-O-(1-carboxyvinyl)-3-phosphoshikimate + phosphate. The protein operates within metabolic intermediate biosynthesis; chorismate biosynthesis; chorismate from D-erythrose 4-phosphate and phosphoenolpyruvate: step 6/7. Catalyzes the transfer of the enolpyruvyl moiety of phosphoenolpyruvate (PEP) to the 5-hydroxyl of shikimate-3-phosphate (S3P) to produce enolpyruvyl shikimate-3-phosphate and inorganic phosphate. This Clostridium tetani (strain Massachusetts / E88) protein is 3-phosphoshikimate 1-carboxyvinyltransferase.